A 441-amino-acid polypeptide reads, in one-letter code: 4-hydroxy-3-methylbut-2-en-1-yl diphosphate synthase (flavodoxin) (441 aa).

The [4Fe-4S] cluster site is built by Cys320, Cys323, Cys366, and Glu373.

It belongs to the IspG family. Requires [4Fe-4S] cluster as cofactor.

It carries out the reaction (2E)-4-hydroxy-3-methylbut-2-enyl diphosphate + oxidized [flavodoxin] + H2O + 2 H(+) = 2-C-methyl-D-erythritol 2,4-cyclic diphosphate + reduced [flavodoxin]. It functions in the pathway isoprenoid biosynthesis; isopentenyl diphosphate biosynthesis via DXP pathway; isopentenyl diphosphate from 1-deoxy-D-xylulose 5-phosphate: step 5/6. In terms of biological role, converts 2C-methyl-D-erythritol 2,4-cyclodiphosphate (ME-2,4cPP) into 1-hydroxy-2-methyl-2-(E)-butenyl 4-diphosphate. In Rhodopseudomonas palustris (strain ATCC BAA-98 / CGA009), this protein is 4-hydroxy-3-methylbut-2-en-1-yl diphosphate synthase (flavodoxin).